The primary structure comprises 183 residues: ATP synthase subunit delta (183 aa).

Belongs to the ATPase delta chain family. As to quaternary structure, F-type ATPases have 2 components, F(1) - the catalytic core - and F(0) - the membrane proton channel. F(1) has five subunits: alpha(3), beta(3), gamma(1), delta(1), epsilon(1). F(0) has three main subunits: a(1), b(2) and c(10-14). The alpha and beta chains form an alternating ring which encloses part of the gamma chain. F(1) is attached to F(0) by a central stalk formed by the gamma and epsilon chains, while a peripheral stalk is formed by the delta and b chains.

The protein localises to the cell membrane. Functionally, f(1)F(0) ATP synthase produces ATP from ADP in the presence of a proton or sodium gradient. F-type ATPases consist of two structural domains, F(1) containing the extramembraneous catalytic core and F(0) containing the membrane proton channel, linked together by a central stalk and a peripheral stalk. During catalysis, ATP synthesis in the catalytic domain of F(1) is coupled via a rotary mechanism of the central stalk subunits to proton translocation. In terms of biological role, this protein is part of the stalk that links CF(0) to CF(1). It either transmits conformational changes from CF(0) to CF(1) or is implicated in proton conduction. This is ATP synthase subunit delta from Halalkalibacterium halodurans (strain ATCC BAA-125 / DSM 18197 / FERM 7344 / JCM 9153 / C-125) (Bacillus halodurans).